The sequence spans 337 residues: Ketol-acid reductoisomerase (NADP(+)) (337 aa).

Positions 3–183 (VEMFYDDDAD…GGARAGVIKT (181 aa)) constitute a KARI N-terminal Rossmann domain. Residues 26–29 (YGSQ), Lys49, Ser52, Ser54, and 84–87 (DTAQ) contribute to the NADP(+) site. His109 is a catalytic residue. Gly135 contacts NADP(+). The 146-residue stretch at 184–329 (TFKEETETDL…KKLRDLMSWV (146 aa)) folds into the KARI C-terminal knotted domain. Mg(2+) contacts are provided by Asp192, Glu196, Glu228, and Glu232. Ser253 lines the substrate pocket.

The protein belongs to the ketol-acid reductoisomerase family. Requires Mg(2+) as cofactor.

The catalysed reaction is (2R)-2,3-dihydroxy-3-methylbutanoate + NADP(+) = (2S)-2-acetolactate + NADPH + H(+). It catalyses the reaction (2R,3R)-2,3-dihydroxy-3-methylpentanoate + NADP(+) = (S)-2-ethyl-2-hydroxy-3-oxobutanoate + NADPH + H(+). The protein operates within amino-acid biosynthesis; L-isoleucine biosynthesis; L-isoleucine from 2-oxobutanoate: step 2/4. It functions in the pathway amino-acid biosynthesis; L-valine biosynthesis; L-valine from pyruvate: step 2/4. Its function is as follows. Involved in the biosynthesis of branched-chain amino acids (BCAA). Catalyzes an alkyl-migration followed by a ketol-acid reduction of (S)-2-acetolactate (S2AL) to yield (R)-2,3-dihydroxy-isovalerate. In the isomerase reaction, S2AL is rearranged via a Mg-dependent methyl migration to produce 3-hydroxy-3-methyl-2-ketobutyrate (HMKB). In the reductase reaction, this 2-ketoacid undergoes a metal-dependent reduction by NADPH to yield (R)-2,3-dihydroxy-isovalerate. The chain is Ketol-acid reductoisomerase (NADP(+)) from Rhodococcus opacus (strain B4).